Reading from the N-terminus, the 90-residue chain is Small ribosomal subunit protein uS19 (90 aa).

Belongs to the universal ribosomal protein uS19 family.

Its function is as follows. Protein S19 forms a complex with S13 that binds strongly to the 16S ribosomal RNA. This is Small ribosomal subunit protein uS19 from Thioalkalivibrio sulfidiphilus (strain HL-EbGR7).